Consider the following 132-residue polypeptide: MDTMNWLDQLKWDAQGLVPVIAQEAATGDVLMFAWMNREALAKTAELGRAVYYSRSRGKLWFKGEESGHVQQVHDIRLDCDSDVVLLKVTQLGHEPGIACHTGRHSCFFNALQNGAWQAVDPVLKDPESIYK.

Asp79 serves as a coordination point for Mg(2+). Cys80 contacts Zn(2+). Residues Asp81 and Asp83 each contribute to the Mg(2+) site. Residues Cys100 and Cys107 each coordinate Zn(2+).

This sequence belongs to the PRA-CH family. As to quaternary structure, homodimer. It depends on Mg(2+) as a cofactor. Zn(2+) is required as a cofactor.

The protein resides in the cytoplasm. The enzyme catalyses 1-(5-phospho-beta-D-ribosyl)-5'-AMP + H2O = 1-(5-phospho-beta-D-ribosyl)-5-[(5-phospho-beta-D-ribosylamino)methylideneamino]imidazole-4-carboxamide. It participates in amino-acid biosynthesis; L-histidine biosynthesis; L-histidine from 5-phospho-alpha-D-ribose 1-diphosphate: step 3/9. Its function is as follows. Catalyzes the hydrolysis of the adenine ring of phosphoribosyl-AMP. This is Phosphoribosyl-AMP cyclohydrolase from Acidovorax ebreus (strain TPSY) (Diaphorobacter sp. (strain TPSY)).